The chain runs to 65 residues: Large ribosomal subunit protein uL29 (65 aa).

The protein belongs to the universal ribosomal protein uL29 family.

The chain is Large ribosomal subunit protein uL29 from Desulforamulus reducens (strain ATCC BAA-1160 / DSM 100696 / MI-1) (Desulfotomaculum reducens).